We begin with the raw amino-acid sequence, 256 residues long: Triosephosphate isomerase (256 aa).

9-11 (NWK) contacts substrate. His-95 serves as the catalytic Electrophile. The active-site Proton acceptor is Glu-167. Substrate is bound by residues Gly-173, Ser-213, and 234-235 (GG).

The protein belongs to the triosephosphate isomerase family. As to quaternary structure, homodimer.

It localises to the cytoplasm. It carries out the reaction D-glyceraldehyde 3-phosphate = dihydroxyacetone phosphate. It participates in carbohydrate biosynthesis; gluconeogenesis. It functions in the pathway carbohydrate degradation; glycolysis; D-glyceraldehyde 3-phosphate from glycerone phosphate: step 1/1. Functionally, involved in the gluconeogenesis. Catalyzes stereospecifically the conversion of dihydroxyacetone phosphate (DHAP) to D-glyceraldehyde-3-phosphate (G3P). The sequence is that of Triosephosphate isomerase from Symbiobacterium thermophilum (strain DSM 24528 / JCM 14929 / IAM 14863 / T).